The chain runs to 126 residues: Holo-[acyl-carrier-protein] synthase (126 aa).

Residues D9 and E58 each coordinate Mg(2+).

This sequence belongs to the P-Pant transferase superfamily. AcpS family. It depends on Mg(2+) as a cofactor.

Its subcellular location is the cytoplasm. The enzyme catalyses apo-[ACP] + CoA = holo-[ACP] + adenosine 3',5'-bisphosphate + H(+). Its function is as follows. Transfers the 4'-phosphopantetheine moiety from coenzyme A to a Ser of acyl-carrier-protein. The chain is Holo-[acyl-carrier-protein] synthase from Pectobacterium atrosepticum (strain SCRI 1043 / ATCC BAA-672) (Erwinia carotovora subsp. atroseptica).